The following is a 274-amino-acid chain: Undecaprenyl-diphosphatase 1 (274 aa).

8 helical membrane-spanning segments follow: residues 7–27, 48–68, 88–108, 115–135, 151–171, 189–209, 221–241, and 253–273; these read LEIF…WLPV, FIST…LVIF, VRLW…GILF, LFFN…IMIG, VTYK…IPGT, YVAA…ASAL, FEWL…IVVI, and FKVF…YFFL.

This sequence belongs to the UppP family.

The protein localises to the cell membrane. It catalyses the reaction di-trans,octa-cis-undecaprenyl diphosphate + H2O = di-trans,octa-cis-undecaprenyl phosphate + phosphate + H(+). In terms of biological role, catalyzes the dephosphorylation of undecaprenyl diphosphate (UPP). Confers resistance to bacitracin. The sequence is that of Undecaprenyl-diphosphatase 1 from Clostridioides difficile (strain 630) (Peptoclostridium difficile).